A 745-amino-acid polypeptide reads, in one-letter code: Exocyst complex component 3 (745 aa).

Lys28 is modified (N6-acetyllysine).

This sequence belongs to the SEC6 family. In terms of assembly, the exocyst complex is composed of EXOC1, EXOC2, EXOC3, EXOC4, EXOC5, EXOC6, EXOC7 and EXOC8. Interacts with EXOC3L1. Interacts with BIRC6/bruce. Interacts with MYRIP. Interacts with SLC6A9.

It is found in the cytoplasm. Its subcellular location is the perinuclear region. The protein resides in the cell projection. It localises to the growth cone. The protein localises to the neuron projection. It is found in the midbody. Its subcellular location is the golgi apparatus. Component of the exocyst complex involved in the docking of exocytic vesicles with fusion sites on the plasma membrane. The polypeptide is Exocyst complex component 3 (EXOC3) (Bos taurus (Bovine)).